The sequence spans 301 residues: Protoheme IX farnesyltransferase (301 aa).

A run of 9 helical transmembrane segments spans residues 20-42 (FTELVKIGIVNSNTITAFTGMWL), 55-75 (VDVIFFTIVGSALIVAASGAF), 105-125 (ALMVALVLGVVGTIMLFMTTW), 126-146 (QAGVLGVIGVFLYVVVYSLYA), 150-172 (LVSNTVIGSFSGAVPPLIGWFAV), 176-198 (FSMVPIMLFLVMFCWQPPHFYAI), 227-247 (MFFWVILLTILPFFMFDLGIV), 249-269 (VILATLLNIGWLALSVYGFKM), and 280-300 (FIYSLNYMTILFVAMVVISIF).

This sequence belongs to the UbiA prenyltransferase family. Protoheme IX farnesyltransferase subfamily. Interacts with CtaA.

It is found in the cell membrane. It carries out the reaction heme b + (2E,6E)-farnesyl diphosphate + H2O = Fe(II)-heme o + diphosphate. It functions in the pathway porphyrin-containing compound metabolism; heme O biosynthesis; heme O from protoheme: step 1/1. Its function is as follows. Converts heme B (protoheme IX) to heme O by substitution of the vinyl group on carbon 2 of heme B porphyrin ring with a hydroxyethyl farnesyl side group. In Listeria welshimeri serovar 6b (strain ATCC 35897 / DSM 20650 / CCUG 15529 / CIP 8149 / NCTC 11857 / SLCC 5334 / V8), this protein is Protoheme IX farnesyltransferase.